Consider the following 407-residue polypeptide: MNFIITTRDFSNDDSVLRAAEMRDNVAGSISKAYKGTVRAEGKKKLLLKHLPVPPGGCSRRNSNLFVFCTERDYRKFHQGIAQLKRAPAELDPHEIQQVTASIRCRLQPSLREPPTPADELQTAVSRVCALFNQLVFTAQLRHYCEHQDKVVSYARDELTKRCGEKSALGVEVHQLVALLPHERHRELCHVLIGLLHQTPHMWARSIRLIGHLRHYLQNSFLHLLMNSGLDIAQVFDGCYHSEAYRMLFQIGHTDSVSAALELSHSAAAGPPEADENNDEGEEDDDELRHSDPAPLHESKKPRNARRPRTRVPPHEQKPEENEEEEEELFPSCKATAAFLRAEPSVSNDDGNGGERCDTLATALRHCADEEDGPLASQTAVRVAATPSPSVTPALTPVTSPITPLCI.

Disordered regions lie at residues 268–330 (AAGP…EELF) and 388–407 (SPSV…PLCI). Over residues 273 to 286 (EADENNDEGEEDDD) the composition is skewed to acidic residues. A compositionally biased stretch (basic and acidic residues) spans 287-301 (ELRHSDPAPLHESKK). The segment covering 302–312 (PRNARRPRTRV) has biased composition (basic residues).

The protein belongs to the HHV-5 UL34 protein family.

It localises to the host nucleus. Its function is as follows. Acts as a transcriptional repressor of the US3 gene expression through a specific DNA sequence named the transcriptional repressive element (tre). The sequence is that of Transcriptional regulator UL34 (UL34) from Human cytomegalovirus (strain Towne) (HHV-5).